Reading from the N-terminus, the 244-residue chain is Carboxy-S-adenosyl-L-methionine synthase (244 aa).

S-adenosyl-L-methionine is bound by residues Tyr41, 66–68, 91–92, Asn134, and Arg201; these read GCS and DN.

This sequence belongs to the class I-like SAM-binding methyltransferase superfamily. Cx-SAM synthase family. As to quaternary structure, homodimer.

It catalyses the reaction prephenate + S-adenosyl-L-methionine = carboxy-S-adenosyl-L-methionine + 3-phenylpyruvate + H2O. Functionally, catalyzes the conversion of S-adenosyl-L-methionine (SAM) to carboxy-S-adenosyl-L-methionine (Cx-SAM). This chain is Carboxy-S-adenosyl-L-methionine synthase, found in Colwellia psychrerythraea (strain 34H / ATCC BAA-681) (Vibrio psychroerythus).